The sequence spans 160 residues: uncharacterized protein (160 aa).

Over residues 1 to 31 (METEKPNTDVKVAQDLEKLKLDEKHKDEKKD) the composition is skewed to basic and acidic residues. Residues 1–160 (METEKPNTDV…DKKDKEHKKE (160 aa)) are disordered. A coiled-coil region spans residues 20-111 (KLDEKHKDEK…KSKLEGKKDK (92 aa)). Residues 32–42 (KKDKKDKKDKK) show a composition bias toward basic residues. A compositionally biased stretch (basic and acidic residues) spans 43–160 (DKKEKTPEEI…DKKDKEHKKE (118 aa)).

This is an uncharacterized protein from Dictyostelium discoideum (Social amoeba).